Here is a 132-residue protein sequence, read N- to C-terminus: Small ribosomal subunit protein uS8c (132 aa).

Belongs to the universal ribosomal protein uS8 family. Part of the 30S ribosomal subunit.

It is found in the plastid. The protein resides in the chloroplast. Its function is as follows. One of the primary rRNA binding proteins, it binds directly to 16S rRNA central domain where it helps coordinate assembly of the platform of the 30S subunit. The protein is Small ribosomal subunit protein uS8c (rps8) of Illicium oligandrum (Star anise).